The chain runs to 230 residues: uncharacterized protein (230 aa).

It belongs to the transferase hexapeptide repeat family.

This is an uncharacterized protein from Escherichia coli O6:K15:H31 (strain 536 / UPEC).